Consider the following 84-residue polypeptide: Large ribosomal subunit protein eL34 (84 aa).

The protein belongs to the eukaryotic ribosomal protein eL34 family.

This chain is Large ribosomal subunit protein eL34, found in Pyrobaculum islandicum (strain DSM 4184 / JCM 9189 / GEO3).